A 131-amino-acid polypeptide reads, in one-letter code: Glycine cleavage system H protein (131 aa).

The Lipoyl-binding domain occupies 24-106 (RVTVGISDHA…YGEGWIFVVE (83 aa)). Lys-65 is subject to N6-lipoyllysine.

It belongs to the GcvH family. In terms of assembly, the glycine cleavage system is composed of four proteins: P, T, L and H. (R)-lipoate is required as a cofactor.

In terms of biological role, the glycine cleavage system catalyzes the degradation of glycine. The H protein shuttles the methylamine group of glycine from the P protein to the T protein. This chain is Glycine cleavage system H protein, found in Xanthomonas campestris pv. campestris (strain 8004).